We begin with the raw amino-acid sequence, 159 residues long: Cytochrome c nitrite reductase subunit NrfH (159 aa).

Over 2–14 (SEEKSRNGPARLK) the chain is Cytoplasmic. Residues 15–33 (LVLGGATLGVVALATVAFG) traverse the membrane as a helical; Signal-anchor for type II membrane protein segment. Topologically, residues 34–159 (MKYTDQRPFC…PISTREVADE (126 aa)) are periplasmic. Residues cysteine 43, cysteine 46, methionine 49, histidine 61, and cysteine 66 each coordinate heme. Position 67 (asparagine 67) interacts with a menaquinol. Heme is bound by residues cysteine 69 and histidine 70. A menaquinol-binding residues include lysine 82 and aspartate 89. Heme is bound at residue aspartate 89. Residues 99 to 100 (GD) form an interaction with NrfA region. The heme site is built by cysteine 116, cysteine 119, histidine 120, cysteine 136, cysteine 139, histidine 140, and histidine 145. The interaction with NrfA stretch occupies residues 123–158 (TNVEVASMEAKKYCTDCHRNVQHMRMKPISTREVAD).

This sequence belongs to the NapC/NirT/NrfH family. Component of the NrfHA cytochrome c nitrite reductase complex composed of 4 NrfA catalytic subunits and 2 NrfH quinone-binding subunits. Interacts with NrfA homodimer. The cofactor is heme.

It is found in the cell inner membrane. In terms of biological role, electron donor subunit of the cytochrome c nitrite reductase holocomplex NrfHA. Acquires electrons from the menaquinone pool and mediates their transfer to the catalytic subunit NrfA in an anaerobic respiratory process of nitrite. The other biological function of the NrfHA holocomplex is to detoxify nitrite. This function is essential for the survival of this organism as it enables it to overcome inhibition by nitrite, which is produced by other organisms living in the same environment. The sequence is that of Cytochrome c nitrite reductase subunit NrfH from Nitratidesulfovibrio vulgaris (strain ATCC 29579 / DSM 644 / CCUG 34227 / NCIMB 8303 / VKM B-1760 / Hildenborough) (Desulfovibrio vulgaris).